We begin with the raw amino-acid sequence, 1452 residues long: ABC multidrug transporter A (1452 aa).

Residues 1 to 20 (MNESHEAGKNSSTNVEEREE) are disordered. N-linked (GlcNAc...) asparagine glycans are attached at residues asparagine 2, asparagine 10, asparagine 228, asparagine 287, and asparagine 311. The 254-residue stretch at 110-363 (LKTLSLARIA…FLQMGFVCPD (254 aa)) folds into the ABC transporter 1 domain. 6 helical membrane passes run 474-494 (VTIS…SIFY), 508-528 (ALLF…MLTL), 554-574 (MIMD…VLYF), 583-603 (GAFF…SMFF), 616-636 (VLPF…FAIP), and 725-745 (IGVI…ATDF). Residues 802–1044 (FQWKDVCFDI…ILIDYFVRNG (243 aa)) enclose the ABC transporter 2 domain. Residue 838-845 (GVSGAGKT) coordinates ATP. 5 consecutive transmembrane segments (helical) span residues 1153 to 1173 (ALCV…PNTI), 1183 to 1203 (IFML…HFVA), 1223 to 1243 (FLIA…VLMF), 1271 to 1291 (LMIW…IAAF), and 1297 to 1317 (AGNL…VLAT). Asparagine 1350, asparagine 1365, and asparagine 1391 each carry an N-linked (GlcNAc...) asparagine glycan. The chain crosses the membrane as a helical span at residues 1418 to 1438 (FGLMWVFIVFNIFAACSLYWW).

This sequence belongs to the ABC transporter superfamily. ABCG family. PDR (TC 3.A.1.205) subfamily.

It is found in the membrane. Functionally, ABC transporter that seems not to be involved in the efflux of toxic substances, at least not the classical compounds such as itraconazole, amphotericin B, voriconazole, posaconazole, ravuconazole, or echinocandins. The polypeptide is ABC multidrug transporter A (Aspergillus fumigatus (Neosartorya fumigata)).